Consider the following 948-residue polypeptide: Glycine dehydrogenase (decarboxylating) (948 aa).

Position 696 is an N6-(pyridoxal phosphate)lysine (K696).

It belongs to the GcvP family. In terms of assembly, the glycine cleavage system is composed of four proteins: P, T, L and H. The cofactor is pyridoxal 5'-phosphate.

It carries out the reaction N(6)-[(R)-lipoyl]-L-lysyl-[glycine-cleavage complex H protein] + glycine + H(+) = N(6)-[(R)-S(8)-aminomethyldihydrolipoyl]-L-lysyl-[glycine-cleavage complex H protein] + CO2. Functionally, the glycine cleavage system catalyzes the degradation of glycine. The P protein binds the alpha-amino group of glycine through its pyridoxal phosphate cofactor; CO(2) is released and the remaining methylamine moiety is then transferred to the lipoamide cofactor of the H protein. This Akkermansia muciniphila (strain ATCC BAA-835 / DSM 22959 / JCM 33894 / BCRC 81048 / CCUG 64013 / CIP 107961 / Muc) protein is Glycine dehydrogenase (decarboxylating).